A 488-amino-acid chain; its full sequence is UDP-glycosyltransferase 92A1 (488 aa).

UDP-alpha-D-glucose is bound by residues S292, 358–360 (APQ), 375–383 (HCGWNSILE), and 397–400 (AAEQ).

This sequence belongs to the UDP-glycosyltransferase family.

The sequence is that of UDP-glycosyltransferase 92A1 (UGT92A1) from Arabidopsis thaliana (Mouse-ear cress).